Here is a 315-residue protein sequence, read N- to C-terminus: WD repeat domain-containing protein 83 (315 aa).

WD repeat units lie at residues 23-62 (CSQG…LLRT), 65-104 (GHGY…VVRK), 107-146 (GHAG…PEPV), 151-188 (EARD…VSSD), 190-228 (VGSP…LLGE), 231-272 (GHKN…LALA), and 275-313 (VGSN…AEGG).

It belongs to the WD repeat MORG1 family. As to quaternary structure, interacts with EGLN3/PHD3. Interacts with ERK signaling proteins MAP2K1/MEK1, MAP2K2/MEK2, LAMTOR3, ARAF/Raf-1, MAPK1/ERK2 and MAPK3/ERK1. Identified in the spliceosome C complex. Interacts with PARD6B and CRB3. Interacts strongly with GTP-bound RRAGA but not with inactive GDP-bound. Interacts with p62/SQSTM1. As to expression, ubiquitous.

The protein localises to the cytoplasm. Its subcellular location is the lysosome. The protein resides in the nucleus. Molecular scaffold protein for various multimeric protein complexes. Acts as a module in the assembly of a multicomponent scaffold for the ERK pathway, linking ERK responses to specific agonists. At low concentrations it enhances ERK activation, whereas high concentrations lead to the inhibition of ERK activation. Also involved in response to hypoxia by acting as a negative regulator of HIF1A/HIF-1-alpha via its interaction with EGLN3/PHD3. May promote degradation of HIF1A. May act by recruiting signaling complexes to a specific upstream activator. May also be involved in pre-mRNA splicing. Participates in tight junction development by regulating apico-basal polarity, a key step in tissue development and organization. Mechanistically, regulates the translocation of PAR6-aPKC from the cytoplasm to the apical surface by acting as an adapter between PARD6B AND CRB3. Also acts as a negative regulator of mTORC1 under nutrient-rich conditions by binding to the active Rag GTPases to inhibit mTORC1 localization to the lysosome and phosphorylation of downstream targets. This facilitates constitutive basal autophagy during nutrient availability. The polypeptide is WD repeat domain-containing protein 83 (Wdr83) (Mus musculus (Mouse)).